Here is a 773-residue protein sequence, read N- to C-terminus: Polymeric immunoglobulin receptor (773 aa).

An N-terminal signal peptide occupies residues 1–18 (MALFLLTCLLAVFSAATA). Topologically, residues 19 to 647 (QSSLLGPSSI…SASGQSGSAK (629 aa)) are extracellular. The Ig-like V-type 1; required for binding to polymeric IgA and IgM domain occupies 25 to 131 (PSSIFGPGEV…RGLDFGVNVL (107 aa)). 5 disulfide bridges follow: C46-C115, C155-C225, C260-C324, C369-C438, and C478-C538. The N-linked (GlcNAc...) asparagine; in variant N-88 glycan is linked to K88. An N-linked (GlcNAc...) asparagine glycan is attached at N108. Ig-like V-type domains are found at residues 138–232 (PDDV…SDPT), 233–340 (AEEQ…TQLR), 352–455 (RSPP…LQIV), and 461–557 (PTID…VELT). An N-linked (GlcNAc...) asparagine glycan is attached at N418. A disordered region spans residues 619–641 (AVQSAEDPASGSRASVDASSASG). Over residues 632–641 (ASVDASSASG) the composition is skewed to low complexity. The helical transmembrane segment at 648-670 (VLISTLVPLGLVLAAGAMAVAIA) threads the bilayer. Residues 671–773 (RARHRRNVDR…AEHQDGPKEA (103 aa)) lie on the Cytoplasmic side of the membrane. S682, S691, S698, and S744 each carry phosphoserine. The segment at 725–746 (ATATESTVEIEEPKKAKRSSKE) is disordered. Over residues 735-746 (EEPKKAKRSSKE) the composition is skewed to basic and acidic residues.

Interacts (mainly via CDR1-like domain) with dimeric IgA. Interacts (mainly via CDR2-like domain) with pentameric IgM. As to quaternary structure, either free or part of the secretory IgA (sIgA) complex that consists of two, four or five IgA monomers, and two additional non-Ig polypeptides, namely the JCHAIN and the secretory component (the proteolytic product of PIGR). Free secretory component interacts with bacterial antigens toxA of C.difficile and eae of E.coli. N-glycosylated. N-glycosylation is required for anchoring IgA molecules to mucus, but is not necessary for Ig binding.

The protein localises to the cell membrane. It is found in the secreted. Mediates selective transcytosis of polymeric IgA and IgM across mucosal epithelial cells. Binds polymeric IgA and IgM at the basolateral surface of epithelial cells. The complex is then transported across the cell to be secreted at the apical surface. During this process, a cleavage occurs that separates the extracellular (known as the secretory component) from the transmembrane segment. Functionally, through its N-linked glycans ensures anchoring of secretory IgA (sIgA) molecules to mucus lining the epithelial surface to neutralize extracellular pathogens. On its own (free form) may act as a non-specific microbial scavenger to prevent pathogen interaction with epithelial cells. The sequence is that of Polymeric immunoglobulin receptor (PIGR) from Oryctolagus cuniculus (Rabbit).